A 170-amino-acid chain; its full sequence is Photosystem II extrinsic protein V (170 aa).

The N-terminal stretch at 1–33 (MASVFSSLRRSLKGLLVLIPVLIGLAVTSPAQA) is a signal peptide. Heme c contacts are provided by Cys70, Cys73, His74, and His125.

It belongs to the cytochrome c family. PsbV subfamily. In terms of assembly, PSII is composed of 1 copy each of membrane proteins PsbA, PsbB, PsbC, PsbD, PsbE, PsbF, PsbH, PsbI, PsbJ, PsbK, PsbL, PsbM, PsbT, PsbX, PsbY, PsbZ, Psb30/Ycf12, peripheral proteins PsbO, CyanoQ (PsbQ), PsbU, PsbV and a large number of cofactors. It forms dimeric complexes. Heme c serves as cofactor.

The protein localises to the cellular thylakoid membrane. Functionally, one of the extrinsic, lumenal subunits of photosystem II (PSII). PSII is a light-driven water plastoquinone oxidoreductase, using light energy to abstract electrons from H(2)O, generating a proton gradient subsequently used for ATP formation. The extrinsic proteins stabilize the structure of photosystem II oxygen-evolving complex (OEC), the ion environment of oxygen evolution and protect the OEC against heat-induced inactivation. Low-potential cytochrome c that plays a role in the OEC of PSII. This Synechococcus sp. (strain CC9605) protein is Photosystem II extrinsic protein V.